Consider the following 546-residue polypeptide: (-)-5-epieremophilene synthase STPS2 (546 aa).

Positions 299, 303, 442, 446, and 450 each coordinate Mg(2+). Residues Asp299–Asp303 carry the DDXXD motif motif.

The protein belongs to the terpene synthase family. Tpsa subfamily. As to quaternary structure, monomer. It depends on Mg(2+) as a cofactor. Highly expressed in leaves. Expressed at levels in flowers.

The catalysed reaction is (2E,6E)-farnesyl diphosphate = (-)-5-epi-eremophilene + diphosphate. Its pathway is secondary metabolite biosynthesis; terpenoid biosynthesis. Its function is as follows. Sesquiterpene synthase that catalyzes the conversion of farnesyl diphosphate to (-)-5-epi-eremophilene. This chain is (-)-5-epieremophilene synthase STPS2, found in Salvia miltiorrhiza (Chinese sage).